We begin with the raw amino-acid sequence, 273 residues long: MSDVTHANGAVANEADDALVIGDHSFSSRILVGTSRYPNPQVMLDALEATGTELVTVAIRRVNIENPAPESHLDLLRRGGYEVLPNTAGCYTAREAVLTARLAREALGTDLLKLEVIGDDETLMPDVEQLLDAAKTLVDDGFTVLAYANDDPITCRKLADLGCAAVMPLGSPIGSGMGIVNPYNLRIIREMIEDTPLIVDAGIGTASDAVTAMELGYDGILVNTAIAQAQHPVDMGRAMRKAVEAGRSAHRAGRIPRRLYAEASSSMEGRIGT.

The Schiff-base intermediate with DXP role is filled by Lys113. Residues Gly174, 201-202 (AG), and 223-224 (NT) each bind 1-deoxy-D-xylulose 5-phosphate.

It belongs to the ThiG family. In terms of assembly, homotetramer. Forms heterodimers with either ThiH or ThiS.

Its subcellular location is the cytoplasm. It catalyses the reaction [ThiS sulfur-carrier protein]-C-terminal-Gly-aminoethanethioate + 2-iminoacetate + 1-deoxy-D-xylulose 5-phosphate = [ThiS sulfur-carrier protein]-C-terminal Gly-Gly + 2-[(2R,5Z)-2-carboxy-4-methylthiazol-5(2H)-ylidene]ethyl phosphate + 2 H2O + H(+). It functions in the pathway cofactor biosynthesis; thiamine diphosphate biosynthesis. Functionally, catalyzes the rearrangement of 1-deoxy-D-xylulose 5-phosphate (DXP) to produce the thiazole phosphate moiety of thiamine. Sulfur is provided by the thiocarboxylate moiety of the carrier protein ThiS. In vitro, sulfur can be provided by H(2)S. This chain is Thiazole synthase, found in Salinibacter ruber (strain DSM 13855 / M31).